A 133-amino-acid polypeptide reads, in one-letter code: Ribonucleases P/MRP protein subunit POP8 (133 aa).

Component of nuclear RNase P and RNase MRP complexes. RNase P consists of an RNA moiety and at least 9 protein subunits including POP1, POP3, POP4, POP5, POP6, POP7, POP8, RPP1 and RPR2. RNase MRP complex consists of an RNA moiety and at least 10 protein subunits including POP1, POP3, POP4, POP5, POP6, POP7, POP8, RMP1, RPP1 and SNM1, many of which are shared with the RNase P complex.

The protein resides in the nucleus. The enzyme catalyses Endonucleolytic cleavage of RNA, removing 5'-extranucleotides from tRNA precursor.. In terms of biological role, component of ribonuclease P, a protein complex that generates mature tRNA molecules by cleaving their 5'-ends. Also a component of RNase MRP, which cleaves pre-rRNA sequences. This Saccharomyces cerevisiae (strain ATCC 204508 / S288c) (Baker's yeast) protein is Ribonucleases P/MRP protein subunit POP8 (POP8).